Consider the following 495-residue polypeptide: Probable cytosol aminopeptidase (495 aa).

Mn(2+) is bound by residues lysine 266 and aspartate 271. Lysine 278 is an active-site residue. 3 residues coordinate Mn(2+): aspartate 289, aspartate 348, and glutamate 350. Arginine 352 is a catalytic residue.

The protein belongs to the peptidase M17 family. The cofactor is Mn(2+).

The protein localises to the cytoplasm. It carries out the reaction Release of an N-terminal amino acid, Xaa-|-Yaa-, in which Xaa is preferably Leu, but may be other amino acids including Pro although not Arg or Lys, and Yaa may be Pro. Amino acid amides and methyl esters are also readily hydrolyzed, but rates on arylamides are exceedingly low.. It catalyses the reaction Release of an N-terminal amino acid, preferentially leucine, but not glutamic or aspartic acids.. In terms of biological role, presumably involved in the processing and regular turnover of intracellular proteins. Catalyzes the removal of unsubstituted N-terminal amino acids from various peptides. The sequence is that of Probable cytosol aminopeptidase from Pseudomonas aeruginosa (strain LESB58).